Here is a 447-residue protein sequence, read N- to C-terminus: Tubulin beta chain (447 aa).

8 residues coordinate GTP: Q11, E69, S138, G142, T143, G144, N204, and N226. E69 contributes to the Mg(2+) binding site. Residues 421 to 447 form a disordered region; that stretch reads EYQQYQDASISEGEEEYEEEAPMEPEE. Over residues 432-447 the composition is skewed to acidic residues; the sequence is EGEEEYEEEAPMEPEE.

Belongs to the tubulin family. Dimer of alpha and beta chains. A typical microtubule is a hollow water-filled tube with an outer diameter of 25 nm and an inner diameter of 15 nM. Alpha-beta heterodimers associate head-to-tail to form protofilaments running lengthwise along the microtubule wall with the beta-tubulin subunit facing the microtubule plus end conferring a structural polarity. Microtubules usually have 13 protofilaments but different protofilament numbers can be found in some organisms and specialized cells. The cofactor is Mg(2+).

The protein resides in the cytoplasm. It localises to the cytoskeleton. Functionally, tubulin is the major constituent of microtubules, a cylinder consisting of laterally associated linear protofilaments composed of alpha- and beta-tubulin heterodimers. Microtubules grow by the addition of GTP-tubulin dimers to the microtubule end, where a stabilizing cap forms. Below the cap, tubulin dimers are in GDP-bound state, owing to GTPase activity of alpha-tubulin. This chain is Tubulin beta chain, found in Rhynchosporium secalis (Barley scald fungus).